A 447-amino-acid chain; its full sequence is Acyl-CoA (8-3)-desaturase (447 aa).

N-acetylmethionine is present on Met1. Topologically, residues Met1–Arg124 are cytoplasmic. The Cytochrome b5 heme-binding domain occupies Thr19–Ala97. Residues Met125 to Leu145 traverse the membrane as a helical segment. Residues Asp146–Leu160 lie on the Lumenal side of the membrane. The chain crosses the membrane as a helical span at residues Val161–Leu180. Over Gln181–Tyr268 the chain is Cytoplasmic. The Histidine box-1 motif lies at His182 to His186. The Histidine box-2 signature appears at His219–His223. The chain crosses the membrane as a helical span at residues Phe269–Phe289. Residues Val290–Arg308 are Lumenal-facing. The chain crosses the membrane as a helical span at residues Ile309 to Val329. Residues Arg330–Gln447 lie on the Cytoplasmic side of the membrane. Positions Gln385–His389 match the Histidine box-3 motif.

Belongs to the fatty acid desaturase type 1 family. In terms of tissue distribution, highly expressed in the adrenal gland, liver, brain, and testis, tissues where lipogenesis and steroidogenesis are active. Expressed in colonic mucosa.

Its subcellular location is the endoplasmic reticulum membrane. The protein localises to the mitochondrion. The enzyme catalyses (8Z,11Z,14Z)-eicosatrienoyl-CoA + 2 Fe(II)-[cytochrome b5] + O2 + 2 H(+) = (5Z,8Z,11Z,14Z)-eicosatetraenoyl-CoA + 2 Fe(III)-[cytochrome b5] + 2 H2O. It carries out the reaction (8Z,11Z,14Z,17Z)-eicosatetraenoyl-CoA + 2 Fe(II)-[cytochrome b5] + O2 + 2 H(+) = (5Z,8Z,11Z,14Z,17Z)-eicosapentaenoyl-CoA + 2 Fe(III)-[cytochrome b5] + 2 H2O. The catalysed reaction is (11E)-octadecenoyl-CoA + 2 Fe(II)-[cytochrome b5] + O2 + 2 H(+) = (5Z,11E)-octadecadienoyl-CoA + 2 Fe(III)-[cytochrome b5] + 2 H2O. Its pathway is lipid metabolism; polyunsaturated fatty acid biosynthesis. Acts as a front-end fatty acyl-coenzyme A (CoA) desaturase that introduces a cis double bond at carbon 5 located between a preexisting double bond and the carboxyl end of the fatty acyl chain. Involved in biosynthesis of highly unsaturated fatty acids (HUFA) from the essential polyunsaturated fatty acids (PUFA) linoleic acid (LA) (18:2n-6) and alpha-linolenic acid (ALA) (18:3n-3) precursors. Specifically, desaturates dihomo-gamma-linoleoate (DGLA) (20:3n-6) and eicosatetraenoate (ETA) (20:4n-3) to generate arachidonate (AA) (20:4n-6) and eicosapentaenoate (EPA) (20:5n-3), respectively. As a rate limiting enzyme for DGLA (20:3n-6) and AA (20:4n-6)-derived eicosanoid biosynthesis, controls the metabolism of inflammatory lipids like prostaglandin E2, critical for efficient acute inflammatory response and maintenance of epithelium homeostasis. Contributes to membrane phospholipid biosynthesis by providing AA (20:4n-6) as a major acyl chain esterified into phospholipids. In particular, regulates phosphatidylinositol-4,5-bisphosphate levels, modulating inflammatory cytokine production in T-cells. Also desaturates (11E)-octadecenoate (trans-vaccenoate)(18:1n-9), a metabolite in the biohydrogenation pathway of LA (18:2n-6). The sequence is that of Acyl-CoA (8-3)-desaturase from Mus musculus (Mouse).